Reading from the N-terminus, the 334-residue chain is Phosphoribosylformylglycinamidine cyclo-ligase (334 aa).

It belongs to the AIR synthase family.

The protein localises to the cytoplasm. The catalysed reaction is 2-formamido-N(1)-(5-O-phospho-beta-D-ribosyl)acetamidine + ATP = 5-amino-1-(5-phospho-beta-D-ribosyl)imidazole + ADP + phosphate + H(+). The protein operates within purine metabolism; IMP biosynthesis via de novo pathway; 5-amino-1-(5-phospho-D-ribosyl)imidazole from N(2)-formyl-N(1)-(5-phospho-D-ribosyl)glycinamide: step 2/2. The polypeptide is Phosphoribosylformylglycinamidine cyclo-ligase (Pyrococcus abyssi (strain GE5 / Orsay)).